The primary structure comprises 363 residues: tRNA U34 carboxymethyltransferase (363 aa).

Residues K101, W134, K139, G159, 181–183 (DPS), 221–222 (LE), M237, Y241, and R356 contribute to the carboxy-S-adenosyl-L-methionine site.

The protein belongs to the class I-like SAM-binding methyltransferase superfamily. CmoB family. As to quaternary structure, homotetramer.

It carries out the reaction carboxy-S-adenosyl-L-methionine + 5-hydroxyuridine(34) in tRNA = 5-carboxymethoxyuridine(34) in tRNA + S-adenosyl-L-homocysteine + H(+). In terms of biological role, catalyzes carboxymethyl transfer from carboxy-S-adenosyl-L-methionine (Cx-SAM) to 5-hydroxyuridine (ho5U) to form 5-carboxymethoxyuridine (cmo5U) at position 34 in tRNAs. This chain is tRNA U34 carboxymethyltransferase, found in Psychrobacter cryohalolentis (strain ATCC BAA-1226 / DSM 17306 / VKM B-2378 / K5).